We begin with the raw amino-acid sequence, 702 residues long: Ribosomal RNA large subunit methyltransferase K/L (702 aa).

Positions 43–154 (LIYQSLMWSR…KETASIALDL (112 aa)) constitute a THUMP domain.

The protein belongs to the methyltransferase superfamily. RlmKL family.

The protein localises to the cytoplasm. The enzyme catalyses guanosine(2445) in 23S rRNA + S-adenosyl-L-methionine = N(2)-methylguanosine(2445) in 23S rRNA + S-adenosyl-L-homocysteine + H(+). The catalysed reaction is guanosine(2069) in 23S rRNA + S-adenosyl-L-methionine = N(2)-methylguanosine(2069) in 23S rRNA + S-adenosyl-L-homocysteine + H(+). In terms of biological role, specifically methylates the guanine in position 2445 (m2G2445) and the guanine in position 2069 (m7G2069) of 23S rRNA. The chain is Ribosomal RNA large subunit methyltransferase K/L from Salmonella typhi.